Reading from the N-terminus, the 68-residue chain is ATP synthase F(0) complex subunit 8 (68 aa).

Residues 8–24 (VWPTIITSMLLTLFLLM) form a helical membrane-spanning segment. K54 carries the N6-acetyllysine; alternate modification. K54 carries the post-translational modification N6-succinyllysine; alternate. K57 carries the N6-acetyllysine modification.

This sequence belongs to the ATPase protein 8 family. Component of the ATP synthase complex composed at least of ATP5F1A/subunit alpha, ATP5F1B/subunit beta, ATP5MC1/subunit c (homooctomer), MT-ATP6/subunit a, MT-ATP8/subunit 8, ATP5ME/subunit e, ATP5MF/subunit f, ATP5MG/subunit g, ATP5MK/subunit k, ATP5MJ/subunit j, ATP5F1C/subunit gamma, ATP5F1D/subunit delta, ATP5F1E/subunit epsilon, ATP5PF/subunit F6, ATP5PB/subunit b, ATP5PD/subunit d, ATP5PO/subunit OSCP. ATP synthase complex consists of a soluble F(1) head domain (subunits alpha(3) and beta(3)) - the catalytic core - and a membrane F(0) domain - the membrane proton channel (subunits c, a, 8, e, f, g, k and j). These two domains are linked by a central stalk (subunits gamma, delta, and epsilon) rotating inside the F1 region and a stationary peripheral stalk (subunits F6, b, d, and OSCP). Interacts with PRICKLE3.

The protein localises to the mitochondrion membrane. Its function is as follows. Subunit 8, of the mitochondrial membrane ATP synthase complex (F(1)F(0) ATP synthase or Complex V) that produces ATP from ADP in the presence of a proton gradient across the membrane which is generated by electron transport complexes of the respiratory chain. ATP synthase complex consist of a soluble F(1) head domain - the catalytic core - and a membrane F(1) domain - the membrane proton channel. These two domains are linked by a central stalk rotating inside the F(1) region and a stationary peripheral stalk. During catalysis, ATP synthesis in the catalytic domain of F(1) is coupled via a rotary mechanism of the central stalk subunits to proton translocation. In vivo, can only synthesize ATP although its ATP hydrolase activity can be activated artificially in vitro. Part of the complex F(0) domain. This chain is ATP synthase F(0) complex subunit 8, found in Symphalangus syndactylus (Siamang).